The sequence spans 164 residues: Peptidyl-prolyl cis-trans isomerase A (164 aa).

Position 1 is an N-acetylmethionine (methionine 1). Position 2 is an N-acetylvaline; in Peptidyl-prolyl cis-trans isomerase A, N-terminally processed (valine 2). The PPIase cyclophilin-type domain maps to 7–163 (FFDISADGEP…KKITISDCGQ (157 aa)). Lysine 28 bears the N6-acetyllysine; alternate mark. Lysine 28 is covalently cross-linked (Glycyl lysine isopeptide (Lys-Gly) (interchain with G-Cter in SUMO2); alternate). Residue lysine 28 forms a Glycyl lysine isopeptide (Lys-Gly) (interchain with G-Cter in ubiquitin); alternate linkage. Residue lysine 44 is modified to N6-acetyllysine. Serine 77 carries the post-translational modification Phosphoserine. The residue at position 82 (lysine 82) is an N6-acetyllysine; alternate. A Glycyl lysine isopeptide (Lys-Gly) (interchain with G-Cter in SUMO2); alternate cross-link involves residue lysine 82. Threonine 93 bears the Phosphothreonine mark. A glycan (N-linked (GlcNAc...) asparagine) is linked at asparagine 108. 3 positions are modified to N6-acetyllysine: lysine 125, lysine 131, and lysine 133.

It belongs to the cyclophilin-type PPIase family. PPIase A subfamily. Interacts with protein phosphatase PPP3CA/calcineurin A. Interacts with PRPF19 isoform 2 (via N-terminus). Interacts with isoform 2 of BSG/CD147. Interacts with FOXO1; the interaction promotes FOXO1 dephosphorylation, nuclear accumulation and transcriptional activity. Interacts with integrin ITGA2B:ITGB3; the interaction is ROS and peptidyl-prolyl cis-trans isomerase (PPIase) activity-dependent and is increased in the presence of thrombin. Interacts with MAP3K5. Interacts with TARDBP; the interaction is dependent on the RNA-binding activity of TARDBP and the PPIase activity of PPIA/CYPA and the acetylation of PPIA/CYPA at Lys-125 favors the interaction. Interacts with HNRNPA1, HNRNPA2B1, HNRNPC, RBMX, HNRNPK and HNRNPM. Acetylation at Lys-125 markedly inhibits catalysis of cis to trans isomerization. PPIA acetylation also antagonizes the immunosuppressive effects of cyclosporine by inhibiting the sequential steps of cyclosporine binding and calcineurin inhibition. Acetylation at Lys-125 favors the interaction with TARDBP.

It localises to the cytoplasm. It is found in the secreted. Its subcellular location is the nucleus. The catalysed reaction is [protein]-peptidylproline (omega=180) = [protein]-peptidylproline (omega=0). Binds cyclosporin A (CsA). CsA mediates some of its effects via an inhibitory action on PPIase. Functionally, catalyzes the cis-trans isomerization of proline imidic peptide bonds in oligopeptides. Exerts a strong chemotactic effect on leukocytes partly through activation of one of its membrane receptors BSG/CD147, initiating a signaling cascade that culminates in MAPK/ERK activation. Activates endothelial cells (ECs) in a proinflammatory manner by stimulating activation of NF-kappa-B and ERK, JNK and p38 MAP-kinases and by inducing expression of adhesion molecules including SELE and VCAM1. Induces apoptosis in ECs by promoting the FOXO1-dependent expression of CCL2 and BCL2L11 which are involved in EC chemotaxis and apoptosis. In response to oxidative stress, initiates proapoptotic and antiapoptotic signaling in ECs via activation of NF-kappa-B and AKT1 and up-regulation of antiapoptotic protein BCL2. Negatively regulates MAP3K5/ASK1 kinase activity, autophosphorylation and oxidative stress-induced apoptosis mediated by MAP3K5/ASK1. Necessary for the assembly of TARDBP in heterogeneous nuclear ribonucleoprotein (hnRNP) complexes and regulates TARDBP binding to RNA UG repeats and TARDBP-dependent expression of HDAC6, ATG7 and VCP which are involved in clearance of protein aggregates. Plays an important role in platelet activation and aggregation. Regulates calcium mobilization and integrin ITGA2B:ITGB3 bidirectional signaling via increased ROS production as well as by facilitating the interaction between integrin and the cell cytoskeleton. Binds heparan sulfate glycosaminoglycans. This chain is Peptidyl-prolyl cis-trans isomerase A (PPIA), found in Cricetulus griseus (Chinese hamster).